Here is a 93-residue protein sequence, read N- to C-terminus: Stage III sporulation protein D (93 aa).

Residues 4-75 enclose the HTH deoR-type domain; sequence YIKERTIKIG…IRHLRGGEAT (72 aa). The segment at residues 21 to 40 is a DNA-binding region (H-T-H motif); it reads KTVRVIAKEFGVSKSTVHKD.

Its function is as follows. This protein regulates the transcription of sigK, which encodes mother cell chamber RNA polymerase sigma-factor (sigma K). This Bacillus subtilis (strain 168) protein is Stage III sporulation protein D (spoIIID).